We begin with the raw amino-acid sequence, 705 residues long: Translation initiation factor IF-2 (705 aa).

The disordered stretch occupies residues 40 to 124 (DDQIKALDKK…QPAAPKEIPS (85 aa)). The segment covering 41–58 (DQIKALDKKFKKEQKNDN) has biased composition (basic and acidic residues). The segment covering 59–77 (KQSTQNNHQKSNNQNQNKG) has biased composition (low complexity). Basic residues predominate over residues 94–108 (KGNKKNNRNNKKNNK). The tr-type G domain maps to 207–376 (ERPAVVTIMG…GLVAEVQELK (170 aa)). Positions 216–223 (GHVDHGKT) are G1. 216–223 (GHVDHGKT) contributes to the GTP binding site. The segment at 241–245 (GITQH) is G2. Residues 262–265 (DTPG) form a G3 region. Residues 262-266 (DTPGH) and 316-319 (NKID) each bind GTP. The interval 316–319 (NKID) is G4. Positions 352 to 354 (SAL) are G5.

This sequence belongs to the TRAFAC class translation factor GTPase superfamily. Classic translation factor GTPase family. IF-2 subfamily.

It is found in the cytoplasm. In terms of biological role, one of the essential components for the initiation of protein synthesis. Protects formylmethionyl-tRNA from spontaneous hydrolysis and promotes its binding to the 30S ribosomal subunits. Also involved in the hydrolysis of GTP during the formation of the 70S ribosomal complex. In Staphylococcus aureus (strain USA300), this protein is Translation initiation factor IF-2.